We begin with the raw amino-acid sequence, 185 residues long: Ribosome-recycling factor (185 aa).

Belongs to the RRF family.

It localises to the cytoplasm. Its function is as follows. Responsible for the release of ribosomes from messenger RNA at the termination of protein biosynthesis. May increase the efficiency of translation by recycling ribosomes from one round of translation to another. This Lactococcus lactis subsp. lactis (strain IL1403) (Streptococcus lactis) protein is Ribosome-recycling factor.